Here is a 365-residue protein sequence, read N- to C-terminus: Patr class I histocompatibility antigen, A-2 alpha chain (365 aa).

Positions 1–24 (MAVMPPRTLLLLLSGALALTQTWA) are cleaved as a signal peptide. An alpha-1 region spans residues 25 to 114 (GSHSMRYFFT…LRGYYNQSED (90 aa)). The Extracellular segment spans residues 25-308 (GSHSMRYFFT…EPSSQPTIPI (284 aa)). N-linked (GlcNAc...) asparagine glycosylation occurs at Asn-110. Residues 115 to 206 (GSHTIQIMYG…ENGKETLQRT (92 aa)) form an alpha-2 region. 2 cysteine pairs are disulfide-bonded: Cys-125/Cys-188 and Cys-227/Cys-283. Residues 207–298 (DPPKTHMTHH…GLPKPLTLRW (92 aa)) form an alpha-3 region. The Ig-like C1-type domain maps to 209-295 (PKTHMTHHPI…QHEGLPKPLT (87 aa)). Positions 299 to 308 (EPSSQPTIPI) are connecting peptide. A helical membrane pass occupies residues 309–332 (VGIIAGLVLLGAVITGAVVAAVMW). Topologically, residues 333–365 (RRKSSDRKGGSYTQAASSDSAQGSDVSLTACKV) are cytoplasmic. The tract at residues 339–360 (RKGGSYTQAASSDSAQGSDVSL) is disordered. Phosphoserine is present on Ser-343. Phosphotyrosine is present on Tyr-344. Over residues 346-359 (QAASSDSAQGSDVS) the composition is skewed to low complexity. Phosphoserine is present on residues Ser-349, Ser-350, Ser-352, Ser-356, and Ser-359.

This sequence belongs to the MHC class I family. In terms of assembly, heterodimer of an alpha chain and a beta chain (beta-2-microglobulin).

The protein resides in the membrane. Involved in the presentation of foreign antigens to the immune system. The polypeptide is Patr class I histocompatibility antigen, A-2 alpha chain (Pan troglodytes (Chimpanzee)).